A 133-amino-acid chain; its full sequence is Global transcriptional regulator Spx (133 aa).

Cys10 and Cys13 form a disulfide bridge.

The protein belongs to the ArsC family. Spx subfamily. Interacts with the C-terminal domain of the alpha subunit of the RNAP.

It localises to the cytoplasm. Its function is as follows. Global transcriptional regulator that plays a key role in stress response and exerts either positive or negative regulation of genes. Acts by interacting with the C-terminal domain of the alpha subunit of the RNA polymerase (RNAP). This interaction can enhance binding of RNAP to the promoter region of target genes and stimulate their transcription, or block interaction of RNAP with activator. This Streptococcus pneumoniae serotype 4 (strain ATCC BAA-334 / TIGR4) protein is Global transcriptional regulator Spx.